A 398-amino-acid polypeptide reads, in one-letter code: Carbamoyl phosphate synthase small chain (398 aa).

The segment at 1-207 is CPSase; that stretch reads MIQTISSSRP…KGYGTNNVHN (207 aa). Serine 60, glycine 257, and glycine 259 together coordinate L-glutamine. In terms of domain architecture, Glutamine amidotransferase type-1 spans 209–397; it reads HIVAIDYGIK…CDLIMNHKKI (189 aa). The active-site Nucleophile is the cysteine 286. Leucine 287, glutamine 290, asparagine 328, glycine 330, and phenylalanine 331 together coordinate L-glutamine. Residues histidine 370 and glutamate 372 contribute to the active site.

This sequence belongs to the CarA family. In terms of assembly, composed of two chains; the small (or glutamine) chain promotes the hydrolysis of glutamine to ammonia, which is used by the large (or ammonia) chain to synthesize carbamoyl phosphate. Tetramer of heterodimers (alpha,beta)4.

It carries out the reaction hydrogencarbonate + L-glutamine + 2 ATP + H2O = carbamoyl phosphate + L-glutamate + 2 ADP + phosphate + 2 H(+). The catalysed reaction is L-glutamine + H2O = L-glutamate + NH4(+). It participates in amino-acid biosynthesis; L-arginine biosynthesis; carbamoyl phosphate from bicarbonate: step 1/1. It functions in the pathway pyrimidine metabolism; UMP biosynthesis via de novo pathway; (S)-dihydroorotate from bicarbonate: step 1/3. In terms of biological role, small subunit of the glutamine-dependent carbamoyl phosphate synthetase (CPSase). CPSase catalyzes the formation of carbamoyl phosphate from the ammonia moiety of glutamine, carbonate, and phosphate donated by ATP, constituting the first step of 2 biosynthetic pathways, one leading to arginine and/or urea and the other to pyrimidine nucleotides. The small subunit (glutamine amidotransferase) binds and cleaves glutamine to supply the large subunit with the substrate ammonia. This is Carbamoyl phosphate synthase small chain from Bartonella tribocorum (strain CIP 105476 / IBS 506).